A 299-amino-acid polypeptide reads, in one-letter code: MGKEEEIARIARRLDKMVTRKNAEGAMDLLRELKNMPITLHLLQSTRVGMSVNALRKQSSDEELIALAKSLIKSWKKLLDVSDGKSRDQGRGTPLPTSSSKDASGTTDLSCKKPDPPRTSSTPRITTFPQVPITCDAVRNKCREMLTLALQTDHDHVAVGVSCEHLSSQIEECIFLDVGNTDMKYKNRVRSRISNLKDAKNPGLRRNVLCGAITPQQIAVMTSEEMASDELKEIRKAMTKEAIREHQMARTGGTQTDLFTCNKCRKKNCTYTQVQTRSSDEPMTTYVVCNECGNRWKFC.

A TFIIS N-terminal domain is found at 5–82 (EEIARIARRL…KSWKKLLDVS (78 aa)). K57 participates in a covalent cross-link: Glycyl lysine isopeptide (Lys-Gly) (interchain with G-Cter in ubiquitin). Phosphoserine is present on residues S59 and S100. A disordered region spans residues 83–126 (DGKSRDQGRGTPLPTSSSKDASGTTDLSCKKPDPPRTSSTPRIT). Residues 95-109 (LPTSSSKDASGTTDL) are compositionally biased toward polar residues. The region spanning 138–254 (VRNKCREMLT…EHQMARTGGT (117 aa)) is the TFIIS central domain. The TFIIS-type zinc-finger motif lies at 257–297 (DLFTCNKCRKKNCTYTQVQTRSSDEPMTTYVVCNECGNRWK). Residues C261, C264, C289, and C292 each contribute to the Zn(2+) site.

The protein belongs to the TFS-II family. In terms of assembly, interacts with the basal transcription factor GTF2B. Interacts with REXO1. Testis specific.

It localises to the nucleus. Functionally, necessary for efficient RNA polymerase II transcription elongation past template-encoded arresting sites. The arresting sites in DNA have the property of trapping a certain fraction of elongating RNA polymerases that pass through, resulting in locked ternary complexes. Cleavage of the nascent transcript by S-II allows the resumption of elongation from the new 3'-terminus. The protein is Transcription elongation factor A protein 2 (Tcea2) of Rattus norvegicus (Rat).